Consider the following 71-residue polypeptide: Plasticin-C2 (71 aa).

Positions Met-1–Cys-22 are cleaved as a signal peptide. Positions Glu-23–Arg-45 are excised as a propeptide. The tract at residues Glu-25–Gly-46 is disordered. Positions Lys-26–Gln-40 are enriched in acidic residues. Position 68 is an asparagine amide (Asn-68). Residues Glu-70 to Ser-71 constitute a propeptide that is removed on maturation.

The protein belongs to the frog skin active peptide (FSAP) family. Plasticin subfamily. As to expression, expressed by the skin glands.

It localises to the secreted. The protein localises to the target cell membrane. Its function is as follows. Neutral peptide with no antimicrobial activity. May act in synergy with cationic peptides by enhancing their activity. Has a moderate hemolytic activity. The protein is Plasticin-C2 of Agalychnis callidryas (Red-eyed tree frog).